The sequence spans 155 residues: MINTEGTKSLEAVDIEELLSILPHRYPFLLIDRIVEIDGEQQAIGIKNITINEPHFMGHFPAKPVMPGVLILEAMAQTAGAISLLRLGNKQTNLVYLMTVDNAKFRKPVIPGDQLKIHVRLLKKRSGMRRFSCVAEVEGVRVAEAEIAAMIIEAE.

His59 is an active-site residue.

This sequence belongs to the thioester dehydratase family. FabZ subfamily.

The protein localises to the cytoplasm. It catalyses the reaction a (3R)-hydroxyacyl-[ACP] = a (2E)-enoyl-[ACP] + H2O. In terms of biological role, involved in unsaturated fatty acids biosynthesis. Catalyzes the dehydration of short chain beta-hydroxyacyl-ACPs and long chain saturated and unsaturated beta-hydroxyacyl-ACPs. The protein is 3-hydroxyacyl-[acyl-carrier-protein] dehydratase FabZ of Bartonella quintana (strain Toulouse) (Rochalimaea quintana).